The chain runs to 445 residues: tRNA-2-methylthio-N(6)-dimethylallyladenosine synthase (445 aa).

The region spanning 3–120 is the MTTase N-terminal domain; it reads RKLFIQTHGC…LPGLITQAAS (118 aa). [4Fe-4S] cluster-binding residues include cysteine 12, cysteine 49, cysteine 83, cysteine 157, cysteine 161, and cysteine 164. The Radical SAM core domain occupies 143-375; the sequence is SVDGPSAFVS…QQRINQNVQD (233 aa). The 65-residue stretch at 378–442 folds into the TRAM domain; sequence RKMVGSTQRI…SNSLLGTDPR (65 aa).

Belongs to the methylthiotransferase family. MiaB subfamily. Monomer. Requires [4Fe-4S] cluster as cofactor.

The protein resides in the cytoplasm. It carries out the reaction N(6)-dimethylallyladenosine(37) in tRNA + (sulfur carrier)-SH + AH2 + 2 S-adenosyl-L-methionine = 2-methylsulfanyl-N(6)-dimethylallyladenosine(37) in tRNA + (sulfur carrier)-H + 5'-deoxyadenosine + L-methionine + A + S-adenosyl-L-homocysteine + 2 H(+). Functionally, catalyzes the methylthiolation of N6-(dimethylallyl)adenosine (i(6)A), leading to the formation of 2-methylthio-N6-(dimethylallyl)adenosine (ms(2)i(6)A) at position 37 in tRNAs that read codons beginning with uridine. The sequence is that of tRNA-2-methylthio-N(6)-dimethylallyladenosine synthase from Alcanivorax borkumensis (strain ATCC 700651 / DSM 11573 / NCIMB 13689 / SK2).